The sequence spans 393 residues: ATP phosphoribosyltransferase regulatory subunit (393 aa).

Belongs to the class-II aminoacyl-tRNA synthetase family. HisZ subfamily. Heteromultimer composed of HisG and HisZ subunits.

It localises to the cytoplasm. It functions in the pathway amino-acid biosynthesis; L-histidine biosynthesis; L-histidine from 5-phospho-alpha-D-ribose 1-diphosphate: step 1/9. Required for the first step of histidine biosynthesis. May allow the feedback regulation of ATP phosphoribosyltransferase activity by histidine. The polypeptide is ATP phosphoribosyltransferase regulatory subunit (Marinobacter nauticus (strain ATCC 700491 / DSM 11845 / VT8) (Marinobacter aquaeolei)).